We begin with the raw amino-acid sequence, 302 residues long: 4-hydroxy-tetrahydrodipicolinate synthase (302 aa).

Residue T44 coordinates pyruvate. The active-site Proton donor/acceptor is Y132. K160 acts as the Schiff-base intermediate with substrate in catalysis. V202 lines the pyruvate pocket.

It belongs to the DapA family. Homotetramer; dimer of dimers.

The protein localises to the cytoplasm. The catalysed reaction is L-aspartate 4-semialdehyde + pyruvate = (2S,4S)-4-hydroxy-2,3,4,5-tetrahydrodipicolinate + H2O + H(+). Its pathway is amino-acid biosynthesis; L-lysine biosynthesis via DAP pathway; (S)-tetrahydrodipicolinate from L-aspartate: step 3/4. Functionally, catalyzes the condensation of (S)-aspartate-beta-semialdehyde [(S)-ASA] and pyruvate to 4-hydroxy-tetrahydrodipicolinate (HTPA). This chain is 4-hydroxy-tetrahydrodipicolinate synthase, found in Thermomicrobium roseum (strain ATCC 27502 / DSM 5159 / P-2).